The sequence spans 289 residues: 4-hydroxy-3-methylbut-2-enyl diphosphate reductase (289 aa).

[4Fe-4S] cluster is bound at residue Cys-12. His-44 and His-81 together coordinate (2E)-4-hydroxy-3-methylbut-2-enyl diphosphate. 2 residues coordinate dimethylallyl diphosphate: His-44 and His-81. Isopentenyl diphosphate-binding residues include His-44 and His-81. Cys-103 contacts [4Fe-4S] cluster. His-130 serves as a coordination point for (2E)-4-hydroxy-3-methylbut-2-enyl diphosphate. His-130 serves as a coordination point for dimethylallyl diphosphate. Position 130 (His-130) interacts with isopentenyl diphosphate. Glu-132 functions as the Proton donor in the catalytic mechanism. Residue Thr-174 participates in (2E)-4-hydroxy-3-methylbut-2-enyl diphosphate binding. Residue Cys-202 coordinates [4Fe-4S] cluster. Residues Ser-230, Asn-232, and Ser-273 each contribute to the (2E)-4-hydroxy-3-methylbut-2-enyl diphosphate site. Dimethylallyl diphosphate-binding residues include Ser-230, Asn-232, and Ser-273. 3 residues coordinate isopentenyl diphosphate: Ser-230, Asn-232, and Ser-273.

The protein belongs to the IspH family. [4Fe-4S] cluster is required as a cofactor.

It catalyses the reaction isopentenyl diphosphate + 2 oxidized [2Fe-2S]-[ferredoxin] + H2O = (2E)-4-hydroxy-3-methylbut-2-enyl diphosphate + 2 reduced [2Fe-2S]-[ferredoxin] + 2 H(+). The enzyme catalyses dimethylallyl diphosphate + 2 oxidized [2Fe-2S]-[ferredoxin] + H2O = (2E)-4-hydroxy-3-methylbut-2-enyl diphosphate + 2 reduced [2Fe-2S]-[ferredoxin] + 2 H(+). It participates in isoprenoid biosynthesis; dimethylallyl diphosphate biosynthesis; dimethylallyl diphosphate from (2E)-4-hydroxy-3-methylbutenyl diphosphate: step 1/1. The protein operates within isoprenoid biosynthesis; isopentenyl diphosphate biosynthesis via DXP pathway; isopentenyl diphosphate from 1-deoxy-D-xylulose 5-phosphate: step 6/6. Catalyzes the conversion of 1-hydroxy-2-methyl-2-(E)-butenyl 4-diphosphate (HMBPP) into a mixture of isopentenyl diphosphate (IPP) and dimethylallyl diphosphate (DMAPP). Acts in the terminal step of the DOXP/MEP pathway for isoprenoid precursor biosynthesis. This Treponema denticola (strain ATCC 35405 / DSM 14222 / CIP 103919 / JCM 8153 / KCTC 15104) protein is 4-hydroxy-3-methylbut-2-enyl diphosphate reductase.